Here is a 260-residue protein sequence, read N- to C-terminus: Diphthine synthase (260 aa).

S-adenosyl-L-methionine-binding positions include Leu-9, Asp-85, Ile-88, 113 to 114 (TA), Leu-168, Ala-202, and His-227.

Belongs to the diphthine synthase family. Homodimer.

The enzyme catalyses 2-[(3S)-amino-3-carboxypropyl]-L-histidyl-[translation elongation factor 2] + 3 S-adenosyl-L-methionine = diphthine-[translation elongation factor 2] + 3 S-adenosyl-L-homocysteine + 3 H(+). The protein operates within protein modification; peptidyl-diphthamide biosynthesis. Functionally, S-adenosyl-L-methionine-dependent methyltransferase that catalyzes the trimethylation of the amino group of the modified target histidine residue in translation elongation factor 2 (EF-2), to form an intermediate called diphthine. The three successive methylation reactions represent the second step of diphthamide biosynthesis. This Haloquadratum walsbyi (strain DSM 16790 / HBSQ001) protein is Diphthine synthase.